The sequence spans 455 residues: Rho GTPase-activating protein 3 (455 aa).

Over residues 1-12 (MTNFSRSKSTGT) the composition is skewed to polar residues. The tract at residues 1 to 68 (MTNFSRSKST…HASRSGNGSG (68 aa)) is disordered. Residues 24–33 (GPDKYENIHN) show a composition bias toward basic and acidic residues. Over residues 43 to 54 (STTSTDYYDAST) the composition is skewed to low complexity. The span at 55–64 (PLSSHASRSG) shows a compositional bias: polar residues. One can recognise a CRIB domain in the interval 105-118 (IGWPTEVKHVSHVT). In terms of domain architecture, Rho-GAP spans 153 to 331 (KSMQCSYDDR…LILMNLKERE (179 aa)). Disordered regions lie at residues 342 to 366 (KQTSDPSEEWESQHSEILSPEKPNN) and 432 to 455 (FVSNRDEGRKGREAWSSRLSSLPW). Residues 435–446 (NRDEGRKGREAW) show a composition bias toward basic and acidic residues.

As to expression, expressed in differentiating xylem cells.

The protein resides in the cell membrane. Its function is as follows. Acts as a GTPase activator for the Rac-type GTPase by converting it to an inactive GDP-bound state. Involved in secondary wall pattern formation. In association with ROPGEF4, mediates local activation of ARAC10/ROP11 to initiate the distinct pattern of secondary cell walls in xylem cells. The chain is Rho GTPase-activating protein 3 (ROPGAP3) from Arabidopsis thaliana (Mouse-ear cress).